The sequence spans 166 residues: Small ribosomal subunit protein uS4 (166 aa).

Residues 102–164 (RRLQTIVWRK…HPSCLEVEKE (63 aa)) form the S4 RNA-binding domain.

Belongs to the universal ribosomal protein uS4 family. Part of the 30S ribosomal subunit. Contacts protein S5. The interaction surface between S4 and S5 is involved in control of translational fidelity.

Its function is as follows. One of the primary rRNA binding proteins, it binds directly to 16S rRNA where it nucleates assembly of the body of the 30S subunit. In terms of biological role, with S5 and S12 plays an important role in translational accuracy. This Korarchaeum cryptofilum (strain OPF8) protein is Small ribosomal subunit protein uS4.